The following is a 487-amino-acid chain: 3-octaprenyl-4-hydroxybenzoate carboxy-lyase (487 aa).

Position 172 (Asn172) interacts with Mn(2+). Prenylated FMN contacts are provided by residues Ile175 to Arg177, Arg189 to Leu191, and Arg194 to Gly195. Residue Glu238 participates in Mn(2+) binding. Asp287 (proton donor) is an active-site residue.

Belongs to the UbiD family. Homohexamer. Prenylated FMN serves as cofactor. Mn(2+) is required as a cofactor.

It localises to the cell membrane. It carries out the reaction a 4-hydroxy-3-(all-trans-polyprenyl)benzoate + H(+) = a 2-(all-trans-polyprenyl)phenol + CO2. Its pathway is cofactor biosynthesis; ubiquinone biosynthesis. Catalyzes the decarboxylation of 3-octaprenyl-4-hydroxy benzoate to 2-octaprenylphenol, an intermediate step in ubiquinone biosynthesis. This chain is 3-octaprenyl-4-hydroxybenzoate carboxy-lyase, found in Blochmanniella pennsylvanica (strain BPEN).